Here is a 576-residue protein sequence, read N- to C-terminus: Sulfite reductase [NADPH] hemoprotein beta-component (576 aa).

4 residues coordinate [4Fe-4S] cluster: Cys-439, Cys-445, Cys-485, and Cys-489. Siroheme is bound at residue Cys-489.

It belongs to the nitrite and sulfite reductase 4Fe-4S domain family. In terms of assembly, alpha(8)-beta(8). The alpha component is a flavoprotein, the beta component is a hemoprotein. Requires siroheme as cofactor. The cofactor is [4Fe-4S] cluster.

The catalysed reaction is hydrogen sulfide + 3 NADP(+) + 3 H2O = sulfite + 3 NADPH + 4 H(+). It functions in the pathway sulfur metabolism; hydrogen sulfide biosynthesis; hydrogen sulfide from sulfite (NADPH route): step 1/1. Its function is as follows. Component of the sulfite reductase complex that catalyzes the 6-electron reduction of sulfite to sulfide. This is one of several activities required for the biosynthesis of L-cysteine from sulfate. This Aliivibrio salmonicida (strain LFI1238) (Vibrio salmonicida (strain LFI1238)) protein is Sulfite reductase [NADPH] hemoprotein beta-component.